Consider the following 319-residue polypeptide: Coproporphyrin III ferrochelatase 2 (319 aa).

Residues Y13, R30, 46-47 (RY), S54, and Y125 contribute to the Fe-coproporphyrin III site. Positions 181 and 262 each coordinate Fe(2+).

It belongs to the ferrochelatase family.

It localises to the cytoplasm. It catalyses the reaction Fe-coproporphyrin III + 2 H(+) = coproporphyrin III + Fe(2+). It participates in porphyrin-containing compound metabolism; protoheme biosynthesis. In terms of biological role, involved in coproporphyrin-dependent heme b biosynthesis. Catalyzes the insertion of ferrous iron into coproporphyrin III to form Fe-coproporphyrin III. The protein is Coproporphyrin III ferrochelatase 2 of Bacillus cereus (strain ATCC 14579 / DSM 31 / CCUG 7414 / JCM 2152 / NBRC 15305 / NCIMB 9373 / NCTC 2599 / NRRL B-3711).